Consider the following 335-residue polypeptide: LIM and SH3 domain protein F42H10.3 (335 aa).

An LIM zinc-binding domain is found at 5–65; that stretch reads CAREDCGKTV…DPHYPKTVAS (61 aa). Nebulin repeat units follow at residues 66-97 and 98-132; these read VMAD…KMKG and TKIE…QKAR. The segment covering 128–142 has biased composition (basic and acidic residues); the sequence is DQKARQEEVRPKEEI. 2 disordered regions span residues 128–151 and 233–264; these read DQKA…PTPI and DFAG…ISPT. Over residues 242–260 the composition is skewed to low complexity; sequence SNSISSTSPHSTLSSPQST. Residues 266-327 form the SH3 domain; sequence KAGFAVKAIY…PANYVQPHKL (62 aa).

This Caenorhabditis elegans protein is LIM and SH3 domain protein F42H10.3.